The primary structure comprises 197 residues: Protein GrpE (197 aa).

Over residues 1–31 (MSDDTKKQDTAADAEVEKEMEGVPEHLRDDR) the composition is skewed to basic and acidic residues. The disordered stretch occupies residues 1-48 (MSDDTKKQDTAADAEVEKEMEGVPEHLRDDRGSEEDASDDLSAALESL).

The protein belongs to the GrpE family. In terms of assembly, homodimer.

The protein localises to the cytoplasm. Participates actively in the response to hyperosmotic and heat shock by preventing the aggregation of stress-denatured proteins, in association with DnaK and GrpE. It is the nucleotide exchange factor for DnaK and may function as a thermosensor. Unfolded proteins bind initially to DnaJ; upon interaction with the DnaJ-bound protein, DnaK hydrolyzes its bound ATP, resulting in the formation of a stable complex. GrpE releases ADP from DnaK; ATP binding to DnaK triggers the release of the substrate protein, thus completing the reaction cycle. Several rounds of ATP-dependent interactions between DnaJ, DnaK and GrpE are required for fully efficient folding. The protein is Protein GrpE of Erythrobacter litoralis (strain HTCC2594).